The sequence spans 657 residues: 1-deoxy-D-xylulose-5-phosphate synthase (657 aa).

Residues His-73 and Ser-113 to Ala-115 contribute to the thiamine diphosphate site. Residue Asp-145 participates in Mg(2+) binding. Thiamine diphosphate contacts are provided by residues Gly-146 to Ala-147, Asn-175, Tyr-293, and Glu-375. Position 175 (Asn-175) interacts with Mg(2+).

Belongs to the transketolase family. DXPS subfamily. Homodimer. Mg(2+) serves as cofactor. Requires thiamine diphosphate as cofactor.

It catalyses the reaction D-glyceraldehyde 3-phosphate + pyruvate + H(+) = 1-deoxy-D-xylulose 5-phosphate + CO2. The protein operates within metabolic intermediate biosynthesis; 1-deoxy-D-xylulose 5-phosphate biosynthesis; 1-deoxy-D-xylulose 5-phosphate from D-glyceraldehyde 3-phosphate and pyruvate: step 1/1. Catalyzes the acyloin condensation reaction between C atoms 2 and 3 of pyruvate and glyceraldehyde 3-phosphate to yield 1-deoxy-D-xylulose-5-phosphate (DXP). The sequence is that of 1-deoxy-D-xylulose-5-phosphate synthase from Renibacterium salmoninarum (strain ATCC 33209 / DSM 20767 / JCM 11484 / NBRC 15589 / NCIMB 2235).